Consider the following 747-residue polypeptide: Protein O-mannosyl-transferase 1 (747 aa).

9 consecutive transmembrane segments (helical) span residues 8–28 (PVVV…MGLL), 40–60 (VVFD…QIFF), 68–88 (FGHM…NFLW), 99–119 (VPVW…VPMA), 122–142 (IVLE…LMLI), 154–174 (LLES…LKFF), 183–203 (SLSW…AVGI), 206–226 (MGVF…WHLL), and 269–289 (LLVI…ILVF). MIR domains are found at residues 318 to 381 (PLEV…VKDP), 392 to 449 (PRPV…LEIV), and 453 to 513 (SDTD…VEEH). N-linked (GlcNAc...) asparagine glycans are attached at residues N435, N471, and N539. The next 3 membrane-spanning stretches (helical) occupy residues 597–617 (IVIW…SLWY), 636–656 (WVLA…PFFL), and 661–681 (LFLY…PVVL).

The protein belongs to the glycosyltransferase 39 family. As to quaternary structure, interacts with POMT2. As to expression, widely expressed. Highly expressed in testis, heart and pancreas. Detected at lower levels in kidney, skeletal muscle, brain, placenta, lung and liver.

The protein localises to the endoplasmic reticulum membrane. It carries out the reaction a di-trans,poly-cis-dolichyl beta-D-mannosyl phosphate + L-seryl-[protein] = 3-O-(alpha-D-mannosyl)-L-seryl-[protein] + a di-trans,poly-cis-dolichyl phosphate + H(+). The catalysed reaction is a di-trans,poly-cis-dolichyl beta-D-mannosyl phosphate + L-threonyl-[protein] = 3-O-(alpha-D-mannosyl)-L-threonyl-[protein] + a di-trans,poly-cis-dolichyl phosphate + H(+). It functions in the pathway protein modification; protein glycosylation. Slightly activated by Mg(2+) and inhibited by both Ca(+) and Mn(2+). EDTA ha no effect on activity in vitro. Its function is as follows. Transfers mannosyl residues to the hydroxyl group of serine or threonine residues. Coexpression of both POMT1 and POMT2 is necessary for enzyme activity, expression of either POMT1 or POMT2 alone is insufficient. Essentially dedicated to O-mannosylation of alpha-DAG1 and few other proteins but not of cadherins and protocaherins. This chain is Protein O-mannosyl-transferase 1 (POMT1), found in Homo sapiens (Human).